A 476-amino-acid polypeptide reads, in one-letter code: Glucan endo-1,3-beta-glucosidase 9 (476 aa).

Residues 1 to 25 form the signal peptide; the sequence is MARRLFLLLLAVTAGLSLTGTTVRA. 2 N-linked (GlcNAc...) asparagine glycosylation sites follow: N88 and N101. Catalysis depends on E122, which acts as the Proton donor. N-linked (GlcNAc...) asparagine glycans are attached at residues N184, N216, N277, N320, N342, N374, and N405. C364 and C424 are disulfide-bonded. S453 carries the GPI-anchor amidated serine lipid modification. Residues 454 to 476 constitute a propeptide, removed in mature form; the sequence is SSQTPNFFQSWPLLLLFLLSGLF.

This sequence belongs to the glycosyl hydrolase 17 family. In terms of processing, contains two additional disulfide bonds.

Its subcellular location is the secreted. The protein localises to the cell wall. It is found in the cell membrane. It catalyses the reaction Hydrolysis of (1-&gt;3)-beta-D-glucosidic linkages in (1-&gt;3)-beta-D-glucans.. The sequence is that of Glucan endo-1,3-beta-glucosidase 9 from Arabidopsis thaliana (Mouse-ear cress).